The following is a 117-amino-acid chain: Anti-adapter protein IraM (117 aa).

It belongs to the IraM/RssC family.

It localises to the cytoplasm. In terms of biological role, involved in the stabilization of the sigma stress factor RpoS. This Klebsiella pneumoniae (strain 342) protein is Anti-adapter protein IraM.